The sequence spans 125 residues: Lectin (125 aa).

Residues 1–120 (MDYEILFSDE…CGGARRVICE (120 aa)) enclose the C-type lectin domain. 2 disulfides stabilise this stretch: Cys-21–Cys-119 and Cys-96–Cys-111.

In terms of assembly, homodimer.

Role in the defense system of the organism against microorganisms. This calcium-binding lectin binds galactose. The sequence is that of Lectin from Polyandrocarpa misakiensis (Tunicate).